A 481-amino-acid chain; its full sequence is tRNA:m(4)X modification enzyme TRM13 homolog (481 aa).

Ala2 carries the N-acetylalanine modification. The segment at 56 to 83 adopts a CHHC U11-48K-type zinc-finger fold; sequence RILCPLDPKHTVYEDQLAKHLKKCNSRE. Residues Cys59, His65, His75, and Cys79 each contribute to the Zn(2+) site. The stretch at 113–140 forms a coiled coil; that stretch reads SLSEEQLEKLIKKLRKASEGLNSTLKDH. The tract at residues 381–408 is disordered; that stretch reads ETSNSTTKRQDNQNDDSEEHDDGGYRIT.

Belongs to the methyltransferase TRM13 family.

It catalyses the reaction cytidine(4) in tRNA(Pro) + S-adenosyl-L-methionine = 2'-O-methylcytidine(4) in tRNA(Pro) + S-adenosyl-L-homocysteine + H(+). The enzyme catalyses cytidine(4) in tRNA(Gly)(GCC) + S-adenosyl-L-methionine = 2'-O-methylcytidine(4) in tRNA(Gly)(GCC) + S-adenosyl-L-homocysteine + H(+). It carries out the reaction adenosine(4) in tRNA(His) + S-adenosyl-L-methionine = 2'-O-methyladenosine(4) in tRNA(His) + S-adenosyl-L-homocysteine + H(+). TRNA methylase which 2'-O-methylates cytidine(4) in tRNA(Pro) and tRNA(Gly)(GCC), and adenosine(4) in tRNA(His). The sequence is that of tRNA:m(4)X modification enzyme TRM13 homolog (TRMT13) from Homo sapiens (Human).